The primary structure comprises 412 residues: Transcription termination factor 3, mitochondrial (412 aa).

Residues 1-67 (MALLAQQLPR…IKTYRTLFWN (67 aa)) constitute a mitochondrion transit peptide.

This sequence belongs to the mTERF family.

It is found in the mitochondrion. In terms of biological role, binds promoter DNA and regulates initiation of transcription. Required for normal mitochondrial transcription and translation, and for normal assembly of mitochondrial respiratory complexes. Required for normal mitochondrial function. Maintains 16S rRNA levels and functions in mitochondrial ribosome assembly by regulating the biogenesis of the 39S ribosomal subunit. The protein is Transcription termination factor 3, mitochondrial (Mterf3) of Mus musculus (Mouse).